Here is a 154-residue protein sequence, read N- to C-terminus: 6,7-dimethyl-8-ribityllumazine synthase (154 aa).

5-amino-6-(D-ribitylamino)uracil contacts are provided by residues Phe-22, 56–58 (AFE), and 81–83 (VLI). Position 86–87 (86–87 (ET)) interacts with (2S)-2-hydroxy-3-oxobutyl phosphate. Residue His-89 is the Proton donor of the active site. Leu-114 is a binding site for 5-amino-6-(D-ribitylamino)uracil. A (2S)-2-hydroxy-3-oxobutyl phosphate-binding site is contributed by Arg-128.

The protein belongs to the DMRL synthase family.

It carries out the reaction (2S)-2-hydroxy-3-oxobutyl phosphate + 5-amino-6-(D-ribitylamino)uracil = 6,7-dimethyl-8-(1-D-ribityl)lumazine + phosphate + 2 H2O + H(+). It functions in the pathway cofactor biosynthesis; riboflavin biosynthesis; riboflavin from 2-hydroxy-3-oxobutyl phosphate and 5-amino-6-(D-ribitylamino)uracil: step 1/2. Functionally, catalyzes the formation of 6,7-dimethyl-8-ribityllumazine by condensation of 5-amino-6-(D-ribitylamino)uracil with 3,4-dihydroxy-2-butanone 4-phosphate. This is the penultimate step in the biosynthesis of riboflavin. In Chlamydia pneumoniae (Chlamydophila pneumoniae), this protein is 6,7-dimethyl-8-ribityllumazine synthase.